The primary structure comprises 216 residues: Probable nicotinate-nucleotide adenylyltransferase (216 aa).

It belongs to the NadD family.

It catalyses the reaction nicotinate beta-D-ribonucleotide + ATP + H(+) = deamido-NAD(+) + diphosphate. It functions in the pathway cofactor biosynthesis; NAD(+) biosynthesis; deamido-NAD(+) from nicotinate D-ribonucleotide: step 1/1. Catalyzes the reversible adenylation of nicotinate mononucleotide (NaMN) to nicotinic acid adenine dinucleotide (NaAD). The protein is Probable nicotinate-nucleotide adenylyltransferase of Geobacillus thermodenitrificans (strain NG80-2).